Reading from the N-terminus, the 751-residue chain is Photosystem I P700 chlorophyll a apoprotein A1 (751 aa).

Transmembrane regions (helical) follow at residues 72-95, 158-181, 197-221, 293-311, 348-371, 387-413, 435-457, and 532-550; these read IFSA…FHGA, LYCT…FHYH, MNHH…HVSL, TAHH…GHMY, WHAQ…HHMY, LSLF…IFMV, AIIS…LYVH, and FLVH…LILL. Residues cysteine 574 and cysteine 583 each contribute to the [4Fe-4S] cluster site. Helical transmembrane passes span 590–611 and 665–687; these read HVFL…HFSW and LSAY…MFLF. Histidine 676 is a binding site for chlorophyll a'. Residues methionine 684 and tyrosine 692 each coordinate chlorophyll a. Tryptophan 693 serves as a coordination point for phylloquinone. Residues 725–745 traverse the membrane as a helical segment; sequence AVGVTHYLLGGIVTTWAFFLA.

The protein belongs to the PsaA/PsaB family. The PsaA/B heterodimer binds the P700 chlorophyll special pair and subsequent electron acceptors. PSI consists of a core antenna complex that captures photons, and an electron transfer chain that converts photonic excitation into a charge separation. The cyanobacterial PSI reaction center is composed of one copy each of PsaA,B,C,D,E,F,I,J,K,L,M and X, and forms trimeric complexes. PSI electron transfer chain: 5 chlorophyll a, 1 chlorophyll a', 2 phylloquinones and 3 4Fe-4S clusters. PSI core antenna: 90 chlorophyll a, 22 carotenoids, 3 phospholipids and 1 galactolipid. P700 is a chlorophyll a/chlorophyll a' dimer, A0 is one or more chlorophyll a, A1 is one or both phylloquinones and FX is a shared 4Fe-4S iron-sulfur center. serves as cofactor.

Its subcellular location is the cellular thylakoid membrane. It catalyses the reaction reduced [plastocyanin] + hnu + oxidized [2Fe-2S]-[ferredoxin] = oxidized [plastocyanin] + reduced [2Fe-2S]-[ferredoxin]. PsaA and PsaB bind P700, the primary electron donor of photosystem I (PSI), as well as the electron acceptors A0, A1 and FX. PSI is a plastocyanin/cytochrome c6-ferredoxin oxidoreductase, converting photonic excitation into a charge separation, which transfers an electron from the donor P700 chlorophyll pair to the spectroscopically characterized acceptors A0, A1, FX, FA and FB in turn. Oxidized P700 is reduced on the lumenal side of the thylakoid membrane by plastocyanin or cytochrome c6. The polypeptide is Photosystem I P700 chlorophyll a apoprotein A1 (Gloeothece citriformis (strain PCC 7424) (Cyanothece sp. (strain PCC 7424))).